The sequence spans 81 residues: RBAK downstream neighbor protein (81 aa).

A signal peptide spans 1–22; the sequence is MWPPLLLLLLLLPAAPVPTAKA.

It is found in the secreted. The sequence is that of RBAK downstream neighbor protein (RBAKDN) from Homo sapiens (Human).